The sequence spans 319 residues: Lipoyl synthase (319 aa).

Cysteine 66, cysteine 71, cysteine 77, cysteine 92, cysteine 96, cysteine 99, and serine 305 together coordinate [4Fe-4S] cluster. A Radical SAM core domain is found at 78–294 (FNRGTATFMI…KKEALSIGFT (217 aa)).

Belongs to the radical SAM superfamily. Lipoyl synthase family. The cofactor is [4Fe-4S] cluster.

The protein localises to the cytoplasm. The enzyme catalyses [[Fe-S] cluster scaffold protein carrying a second [4Fe-4S](2+) cluster] + N(6)-octanoyl-L-lysyl-[protein] + 2 oxidized [2Fe-2S]-[ferredoxin] + 2 S-adenosyl-L-methionine + 4 H(+) = [[Fe-S] cluster scaffold protein] + N(6)-[(R)-dihydrolipoyl]-L-lysyl-[protein] + 4 Fe(3+) + 2 hydrogen sulfide + 2 5'-deoxyadenosine + 2 L-methionine + 2 reduced [2Fe-2S]-[ferredoxin]. Its pathway is protein modification; protein lipoylation via endogenous pathway; protein N(6)-(lipoyl)lysine from octanoyl-[acyl-carrier-protein]: step 2/2. Functionally, catalyzes the radical-mediated insertion of two sulfur atoms into the C-6 and C-8 positions of the octanoyl moiety bound to the lipoyl domains of lipoate-dependent enzymes, thereby converting the octanoylated domains into lipoylated derivatives. In Buchnera aphidicola subsp. Schizaphis graminum (strain Sg), this protein is Lipoyl synthase.